A 374-amino-acid chain; its full sequence is Histidine biosynthesis bifunctional protein HisB (374 aa).

Residues 1–183 form a histidinol-phosphatase region; sequence MKKKVLFIDR…RVAEFLFAGE (183 aa). The Nucleophile role is filled by D9. Mg(2+)-binding residues include D9, D11, and D131. Catalysis depends on D11, which acts as the Proton donor. Residues 184–374 form an imidazoleglycerol-phosphate dehydratase region; sequence RRAEIRRTTK…FELPSSKGVL (191 aa).

It in the N-terminal section; belongs to the histidinol-phosphatase family. This sequence in the C-terminal section; belongs to the imidazoleglycerol-phosphate dehydratase family. Requires Mg(2+) as cofactor.

The protein resides in the cytoplasm. The enzyme catalyses D-erythro-1-(imidazol-4-yl)glycerol 3-phosphate = 3-(imidazol-4-yl)-2-oxopropyl phosphate + H2O. It catalyses the reaction L-histidinol phosphate + H2O = L-histidinol + phosphate. Its pathway is amino-acid biosynthesis; L-histidine biosynthesis; L-histidine from 5-phospho-alpha-D-ribose 1-diphosphate: step 6/9. It functions in the pathway amino-acid biosynthesis; L-histidine biosynthesis; L-histidine from 5-phospho-alpha-D-ribose 1-diphosphate: step 8/9. This chain is Histidine biosynthesis bifunctional protein HisB, found in Bacteroides fragilis (strain ATCC 25285 / DSM 2151 / CCUG 4856 / JCM 11019 / LMG 10263 / NCTC 9343 / Onslow / VPI 2553 / EN-2).